Here is a 183-residue protein sequence, read N- to C-terminus: Glutamyl-tRNA(Gln) amidotransferase subunit F, mitochondrial (183 aa).

This sequence belongs to the GatF family. In terms of assembly, subunit of the heterotrimeric GatFAB amidotransferase (AdT) complex, composed of A (HER2), B (PET112) and F (YGR102C) subunits.

It localises to the mitochondrion inner membrane. The catalysed reaction is L-glutamyl-tRNA(Gln) + L-glutamine + ATP + H2O = L-glutaminyl-tRNA(Gln) + L-glutamate + ADP + phosphate + H(+). Functionally, allows the formation of correctly charged Gln-tRNA(Gln) through the transamidation of misacylated Glu-tRNA(Gln) in the mitochondria. The reaction takes place in the presence of glutamine and ATP through an activated gamma-phospho-Glu-tRNA(Gln). Required for proper protein synthesis within the mitochondrion. This Saccharomyces cerevisiae (strain ATCC 204508 / S288c) (Baker's yeast) protein is Glutamyl-tRNA(Gln) amidotransferase subunit F, mitochondrial.